A 74-amino-acid chain; its full sequence is Anionic peptide clone 9 (74 aa).

An N-terminal signal peptide occupies residues 1 to 24 (MVSKSLIVLLLVSVLVSTFFTTEA).

It belongs to the non-disulfide-bridged peptide (NDBP) superfamily. Long chain multifunctional peptide (group 2) family. As to expression, expressed by the venom gland.

It localises to the secreted. May be an antimicrobial peptide. The polypeptide is Anionic peptide clone 9 (Tityus costatus (Brazilian scorpion)).